The sequence spans 1563 residues: MAEPISNPTRINILGKDNIIIDHGIWLNFVAQDLLQNIKSSTYILITDTNLYKTYVPPFQSVFEKAAPQDVRLLTYAIPPGEYSKGRDTKAEIEDWMLSHQCTRDTVIIALGGGVIGDMIGYVAATFMRGVRFVQCPTTLLAMVDSSIGGKTAIDVPMGKNLIGAFWQPERIYIDLTFLNTLPVREFINGMAEVIKTAAIWDENEFTALEENAKAILEAVRSKNKSADRLAPIRDILKRIVLGSARVKAEVVSSDEREGGLRNLLNFGHSIGHAYEAILTPQVLHGEAVAIGMVKEAELARFLGVLRPSAVARLSKCIASYDLPTSLQDKRIVKLTAGKECPVDVLLQKMAVDKKNEGRKKKIVLLSAIGKTYEPKASVVEDRAIRIVLSPCIRVFAGVPKDLNVSVTPPGSKSISNRALILAALGEGTTRIHNLLHSDDTQVMLNAVAQLQGASFSWEEGDVLVVKGNGGKLQATSTPLYLGNAGTASRFLTSVAALCNPSDVNSTVLTGNARMKQRPIGALVDALRANGVGVKYLEKEHSLPVQVDAAGGLAGGVMELAATISSQYVSSLLMAAPYAREPVTLRLVGGKPISQPYIDMTIAMMASFGVQVQRSAEDPNTYYIPQGTYKNPETYVVESDASSATYPLAIAAITGTTCTVPNIGSKSLQGDARFAIEVLRPMGCTVEQTDVSTTVTGPPIGTLKAIPHVDMEPMTDAFLTASVLAAVASGTTQITGIANQRVKECNRILAMKDQLAKFGVHCNELEDGIEVIGIPYTELKNPTEGIYCYDDHRVAMSFSVLSTISPHPVLILERECTGKTWPGWWDTMSNYFKVHLEGEEEPHSSHVSHEKPRKGNPKSIFIIGMRGAGKSTAGKWMSEVLNRPLIDLDHELERREGQTIPEIIRSERGWEGFRKAELELLEDVIKNNPTGHIFSCGGGIVETEAARKMLLSYSQNGGIVLLVHRDTDQVVEYLMRDKSRPAYSENIREVYYRRKPFFEECSNFRYYSPHPDGSKALTEPPFDFSQFLSVICGHSNHLEEVKKKPHSFFVSLTVPNVSKALDIIPKVVVGSDAVELRVDLLEDYDPEFVAKQVALLRSAARIPIVYTVRTVSQGGKFPDDDYELALKLYRTGLQAGVEYLDLEMTMPDEVIEAVTNEKGYTHIIASHHDPKATLSWKNGGWIQYYNKALQHGDVVKLVGVARELADNFALARFKASLAAAHDKPLIALNMGAAGKLSRVLNGFLTPVSHPALPSKAAPGQLSAAEIRQALALIGELEPRSFHLFGNPISASRSPALHNALFRDNGLPHQYSLFETDNAADVKDLIRAPGFGGASVTIPLKLDIMPLLDEVSDAAKVIGAVNTIIPVRNGDKVTLRGDNTDWMGMVYALRNAGVVKCTKESPTAGMVVGAGGTTRAAVHALHDLGFAPIYVVARNADRVKALAESFPAEYDIRSLSTPEEVAAESTAQPSVVISTIPADKPIDQSMREVIVASLRHPSVADGKHVLLEMAYTPRHTPLMQLAEDAHWQTIPGLEVLAAQGWYQFQLWTGITPIYTDAQAAVMGN.

A 3-dehydroquinate synthase region spans residues 1–382 (MAEPISNPTR…YEPKASVVED (382 aa)). NAD(+) is bound by residues 48 to 50 (DTN), 82 to 85 (EYSK), 113 to 115 (GGV), and Asp-118. Arg-129 is a 7-phospho-2-dehydro-3-deoxy-D-arabino-heptonate binding site. An NAD(+)-binding site is contributed by 138–139 (TT). 2 residues coordinate 7-phospho-2-dehydro-3-deoxy-D-arabino-heptonate: Asp-145 and Lys-151. Position 160 (Lys-160) interacts with NAD(+). Asn-161 contributes to the 7-phospho-2-dehydro-3-deoxy-D-arabino-heptonate binding site. NAD(+)-binding positions include 178–181 (FLNT) and Asn-189. Glu-193 provides a ligand contact to Zn(2+). 7-phospho-2-dehydro-3-deoxy-D-arabino-heptonate contacts are provided by residues 193 to 196 (EVIK) and Lys-248. Catalysis depends on Glu-258, which acts as the Proton acceptor; for 3-dehydroquinate synthase activity. Residues 262-266 (RNLLN) and His-269 contribute to the 7-phospho-2-dehydro-3-deoxy-D-arabino-heptonate site. Position 269 (His-269) interacts with Zn(2+). Catalysis depends on His-273, which acts as the Proton acceptor; for 3-dehydroquinate synthase activity. 7-phospho-2-dehydro-3-deoxy-D-arabino-heptonate-binding residues include His-285 and Lys-354. His-285 serves as a coordination point for Zn(2+). The interval 395-834 (VFAGVPKDLN…WDTMSNYFKV (440 aa)) is EPSP synthase. The For EPSP synthase activity role is filled by Cys-816. The tract at residues 857–1051 (PKSIFIIGMR…KKKPHSFFVS (195 aa)) is shikimate kinase. An ATP-binding site is contributed by 864 to 871 (GMRGAGKS). The tract at residues 1052–1265 (LTVPNVSKAL…AAPGQLSAAE (214 aa)) is 3-dehydroquinase. Catalysis depends on His-1168, which acts as the Proton acceptor; for 3-dehydroquinate dehydratase activity. Residue Lys-1196 is the Schiff-base intermediate with substrate; for 3-dehydroquinate dehydratase activity of the active site. The shikimate dehydrogenase stretch occupies residues 1278–1563 (PRSFHLFGNP…TDAQAAVMGN (286 aa)).

In the N-terminal section; belongs to the sugar phosphate cyclases superfamily. Dehydroquinate synthase family. This sequence in the 2nd section; belongs to the EPSP synthase family. The protein in the 3rd section; belongs to the shikimate kinase family. It in the 4th section; belongs to the type-I 3-dehydroquinase family. In the C-terminal section; belongs to the shikimate dehydrogenase family. Homodimer. It depends on Zn(2+) as a cofactor.

It localises to the cytoplasm. The catalysed reaction is 7-phospho-2-dehydro-3-deoxy-D-arabino-heptonate = 3-dehydroquinate + phosphate. It catalyses the reaction 3-dehydroquinate = 3-dehydroshikimate + H2O. It carries out the reaction shikimate + NADP(+) = 3-dehydroshikimate + NADPH + H(+). The enzyme catalyses shikimate + ATP = 3-phosphoshikimate + ADP + H(+). The catalysed reaction is 3-phosphoshikimate + phosphoenolpyruvate = 5-O-(1-carboxyvinyl)-3-phosphoshikimate + phosphate. Its pathway is metabolic intermediate biosynthesis; chorismate biosynthesis; chorismate from D-erythrose 4-phosphate and phosphoenolpyruvate: step 2/7. It participates in metabolic intermediate biosynthesis; chorismate biosynthesis; chorismate from D-erythrose 4-phosphate and phosphoenolpyruvate: step 3/7. The protein operates within metabolic intermediate biosynthesis; chorismate biosynthesis; chorismate from D-erythrose 4-phosphate and phosphoenolpyruvate: step 4/7. It functions in the pathway metabolic intermediate biosynthesis; chorismate biosynthesis; chorismate from D-erythrose 4-phosphate and phosphoenolpyruvate: step 5/7. Its pathway is metabolic intermediate biosynthesis; chorismate biosynthesis; chorismate from D-erythrose 4-phosphate and phosphoenolpyruvate: step 6/7. Functionally, the AROM polypeptide catalyzes 5 consecutive enzymatic reactions in prechorismate polyaromatic amino acid biosynthesis. The sequence is that of Pentafunctional AROM polypeptide from Neurospora crassa (strain ATCC 24698 / 74-OR23-1A / CBS 708.71 / DSM 1257 / FGSC 987).